We begin with the raw amino-acid sequence, 535 residues long: Bifunctional purine biosynthesis protein PurH (535 aa).

In terms of domain architecture, MGS-like spans 6–151 (TRLPIRRALI…KNHKDVAIVV (146 aa)).

The protein belongs to the PurH family.

The catalysed reaction is (6R)-10-formyltetrahydrofolate + 5-amino-1-(5-phospho-beta-D-ribosyl)imidazole-4-carboxamide = 5-formamido-1-(5-phospho-D-ribosyl)imidazole-4-carboxamide + (6S)-5,6,7,8-tetrahydrofolate. It catalyses the reaction IMP + H2O = 5-formamido-1-(5-phospho-D-ribosyl)imidazole-4-carboxamide. It functions in the pathway purine metabolism; IMP biosynthesis via de novo pathway; 5-formamido-1-(5-phospho-D-ribosyl)imidazole-4-carboxamide from 5-amino-1-(5-phospho-D-ribosyl)imidazole-4-carboxamide (10-formyl THF route): step 1/1. It participates in purine metabolism; IMP biosynthesis via de novo pathway; IMP from 5-formamido-1-(5-phospho-D-ribosyl)imidazole-4-carboxamide: step 1/1. In Pseudomonas aeruginosa (strain LESB58), this protein is Bifunctional purine biosynthesis protein PurH.